Reading from the N-terminus, the 102-residue chain is Co-chaperonin GroES (102 aa).

The protein belongs to the GroES chaperonin family. As to quaternary structure, heptamer of 7 subunits arranged in a ring. Interacts with the chaperonin GroEL.

The protein resides in the cytoplasm. Functionally, together with the chaperonin GroEL, plays an essential role in assisting protein folding. The GroEL-GroES system forms a nano-cage that allows encapsulation of the non-native substrate proteins and provides a physical environment optimized to promote and accelerate protein folding. GroES binds to the apical surface of the GroEL ring, thereby capping the opening of the GroEL channel. The sequence is that of Co-chaperonin GroES from Chlamydia caviae (strain ATCC VR-813 / DSM 19441 / 03DC25 / GPIC) (Chlamydophila caviae).